The chain runs to 989 residues: Phosphoenolpyruvate carboxylase (989 aa).

Residues His-175 and Lys-630 contribute to the active site.

The protein belongs to the PEPCase type 1 family. Mg(2+) is required as a cofactor.

It carries out the reaction oxaloacetate + phosphate = phosphoenolpyruvate + hydrogencarbonate. Forms oxaloacetate, a four-carbon dicarboxylic acid source for the tricarboxylic acid cycle. The chain is Phosphoenolpyruvate carboxylase from Prochlorococcus marinus (strain MIT 9312).